Consider the following 307-residue polypeptide: uncharacterized protein (307 aa).

Residues 1 to 25 (MKFQKRNIQLVLILLLILNNCFINS) form the signal peptide. Residues 60–90 (ENNNKNNNNNNNNNNNNNNNNKNSKVKNDDS) are disordered. Low complexity predominate over residues 63-82 (NKNNNNNNNNNNNNNNNNKN). Asparagine 124 and asparagine 173 each carry an N-linked (GlcNAc...) asparagine glycan. 2 helical membrane passes run 244 to 264 (IIFAITFIIFLFTYLIIYYLA) and 275 to 295 (IIGVLTVFLWVIITLLFTIVI).

Its subcellular location is the membrane. This is an uncharacterized protein from Dictyostelium discoideum (Social amoeba).